Here is a 1149-residue protein sequence, read N- to C-terminus: ATP-dependent helicase/deoxyribonuclease subunit B (1149 aa).

An ATP-binding site is contributed by 8–15 (GRAGTGKT). [4Fe-4S] cluster contacts are provided by C784, C1102, C1105, and C1111.

Belongs to the helicase family. AddB/RexB type 1 subfamily. As to quaternary structure, heterodimer of AddA and AddB. Requires Mg(2+) as cofactor. [4Fe-4S] cluster is required as a cofactor.

Functionally, the heterodimer acts as both an ATP-dependent DNA helicase and an ATP-dependent, dual-direction single-stranded exonuclease. Recognizes the chi site generating a DNA molecule suitable for the initiation of homologous recombination. The AddB subunit has 5' -&gt; 3' nuclease activity but not helicase activity. The chain is ATP-dependent helicase/deoxyribonuclease subunit B from Thermoanaerobacter pseudethanolicus (strain ATCC 33223 / 39E) (Clostridium thermohydrosulfuricum).